A 250-amino-acid chain; its full sequence is ATP synthase subunit a (250 aa).

5 consecutive transmembrane segments (helical) span residues 27–47 (TDTV…AFYL), 83–103 (IAPF…ISNW), 129–149 (INYV…AGIW), 191–211 (IFAG…IMWA), and 219–239 (FDLF…ILYF).

This sequence belongs to the ATPase A chain family. As to quaternary structure, F-type ATPases have 2 components, CF(1) - the catalytic core - and CF(0) - the membrane proton channel. CF(1) has five subunits: alpha(3), beta(3), gamma(1), delta(1), epsilon(1). CF(0) has three main subunits: a(1), b(2) and c(9-12). The alpha and beta chains form an alternating ring which encloses part of the gamma chain. CF(1) is attached to CF(0) by a central stalk formed by the gamma and epsilon chains, while a peripheral stalk is formed by the delta and b chains.

It localises to the cell membrane. Functionally, key component of the proton channel; it plays a direct role in the translocation of protons across the membrane. This is ATP synthase subunit a from Mycobacterium marinum (strain ATCC BAA-535 / M).